Consider the following 180-residue polypeptide: Pro-glucagon (180 aa).

The N-terminal stretch at 1–20 (MKSIYFVAGLFVMLVQGSWQ) is a signal peptide. The disordered stretch occupies residues 26–59 (TEEKSRSFSASQADPLSDPDQMNEDKRHSQGTFT). The residue at position 54 (S54) is a Phosphoserine. A propeptide spanning residues 84 to 89 (NRNNIA) is cleaved from the precursor. Residues S105 and S108 each carry the phosphoserine modification. R127 carries the post-translational modification Arginine amide. Residues 131-145 (DFPEEVAIVEELGRR) constitute a propeptide that is removed on maturation. A phosphoserine mark is found at S150 and S152.

This sequence belongs to the glucagon family. In terms of processing, proglucagon is post-translationally processed in a tissue-specific manner in pancreatic A cells and intestinal L cells. In pancreatic A cells, the major bioactive hormone is glucagon cleaved by PCSK2/PC2. In the intestinal L cells PCSK1/PC1 liberates GLP-1, GLP-2, glicentin and oxyntomodulin. GLP-1 is further N-terminally truncated by post-translational processing in the intestinal L cells resulting in GLP-1(7-37) GLP-1-(7-36)amide. The C-terminal amidation is neither important for the metabolism of GLP-1 nor for its effects on the endocrine pancreas. Secreted in the A cells of the islets of Langerhans. As to expression, secreted in the A cells of the islets of Langerhans. Secreted from enteroendocrine L cells throughout the gastrointestinal tract. Also secreted in selected neurons in the brain. In terms of tissue distribution, secreted from enteroendocrine cells throughout the gastrointestinal tract. Also secreted in selected neurons in the brain. Secreted from enteroendocrine cells throughout the gastrointestinal tract.

It localises to the secreted. Functionally, plays a key role in glucose metabolism and homeostasis. Regulates blood glucose by increasing gluconeogenesis and decreasing glycolysis. A counterregulatory hormone of insulin, raises plasma glucose levels in response to insulin-induced hypoglycemia. Plays an important role in initiating and maintaining hyperglycemic conditions in diabetes. Potent stimulator of glucose-dependent insulin release. Also stimulates insulin release in response to IL6. Plays important roles on gastric motility and the suppression of plasma glucagon levels. May be involved in the suppression of satiety and stimulation of glucose disposal in peripheral tissues, independent of the actions of insulin. Has growth-promoting activities on intestinal epithelium. May also regulate the hypothalamic pituitary axis (HPA) via effects on LH, TSH, CRH, oxytocin, and vasopressin secretion. Increases islet mass through stimulation of islet neogenesis and pancreatic beta cell proliferation. Inhibits beta cell apoptosis. In terms of biological role, stimulates intestinal growth and up-regulates villus height in the small intestine, concomitant with increased crypt cell proliferation and decreased enterocyte apoptosis. The gastrointestinal tract, from the stomach to the colon is the principal target for GLP-2 action. Plays a key role in nutrient homeostasis, enhancing nutrient assimilation through enhanced gastrointestinal function, as well as increasing nutrient disposal. Stimulates intestinal glucose transport and decreases mucosal permeability. Its function is as follows. Significantly reduces food intake. Inhibits gastric emptying in humans. Suppression of gastric emptying may lead to increased gastric distension, which may contribute to satiety by causing a sensation of fullness. Functionally, may modulate gastric acid secretion and the gastro-pyloro-duodenal activity. May play an important role in intestinal mucosal growth in the early period of life. In Homo sapiens (Human), this protein is Pro-glucagon.